A 332-amino-acid chain; its full sequence is L-lactate dehydrogenase C chain (332 aa).

S2 bears the Blocked amino end (Ser) mark. NAD(+)-binding positions include 29 to 57 (GNVGMACAISILLKGLADELALVDADENK) and R99. Positions 106, 138, and 169 each coordinate substrate. Residue N138 coordinates NAD(+). The active-site Proton acceptor is the H193. T248 is a substrate binding site.

Belongs to the LDH/MDH superfamily. LDH family. As to quaternary structure, homotetramer. Interacts with RABL2/RABL2A; binds preferentially to GTP-bound RABL2.

The protein localises to the cytoplasm. The catalysed reaction is (S)-lactate + NAD(+) = pyruvate + NADH + H(+). Its pathway is fermentation; pyruvate fermentation to lactate; (S)-lactate from pyruvate: step 1/1. In terms of biological role, possible role in sperm motility. The chain is L-lactate dehydrogenase C chain (Ldhc) from Rattus norvegicus (Rat).